Consider the following 186-residue polypeptide: Golgi apparatus membrane protein-like protein ECHIDNA (186 aa).

Methionine 1 bears the N-acetylmethionine mark. 3 helical membrane passes run 35–55 (ILSALFFNSFVIIFVVTVLLA), 108–128 (FWWTLYLAAAAWFILGVFSLI), and 132–152 (ADYLLVVGVCLSLNVANIIGF).

The protein belongs to the TVP23 family. Component of a trans-Golgi network (TGN)-localized ECH/YIP4 complex made of ECH, YIP4A and YIP4B. Interacts directly with YIP4A and YIP4B.

The protein localises to the golgi apparatus. Its subcellular location is the trans-Golgi network membrane. It localises to the early endosome membrane. Its function is as follows. Mediates trans-Golgi-network trafficking and cell elongation. Required for keeping the appropriate balance between secretory trafficking and vacuolar targeting of a subset of proteins. The ECH/YIP4 complex is involved in the modulation of the trans-Golgi network (TGN)-mediated trafficking of some proteins and cell wall components (e.g. pectin and hemicellulose) to the cell wall in dark-grown hypocotyls and in secretory cells of the seed coat. The sequence is that of Golgi apparatus membrane protein-like protein ECHIDNA from Arabidopsis thaliana (Mouse-ear cress).